A 390-amino-acid polypeptide reads, in one-letter code: GTPase Obg (390 aa).

The Obg domain occupies 1 to 159 (MKFVDEAAIL…RDILLELLLL (159 aa)). In terms of domain architecture, OBG-type G spans 160 to 333 (ADVGMLGLPN…LCWDVMKFIN (174 aa)). GTP contacts are provided by residues 166–173 (GLPNAGKS), 191–195 (FTTLV), 213–216 (DIPG), 283–286 (NKID), and 314–316 (SAV). Mg(2+) is bound by residues serine 173 and threonine 193. Residues 366 to 384 (AEADDDWDDDWDEEDDEGV) show a composition bias toward acidic residues. A disordered region spans residues 366–390 (AEADDDWDDDWDEEDDEGVEIIYQK).

It belongs to the TRAFAC class OBG-HflX-like GTPase superfamily. OBG GTPase family. In terms of assembly, monomer. Requires Mg(2+) as cofactor.

It is found in the cytoplasm. An essential GTPase which binds GTP, GDP and possibly (p)ppGpp with moderate affinity, with high nucleotide exchange rates and a fairly low GTP hydrolysis rate. Plays a role in control of the cell cycle, stress response, ribosome biogenesis and in those bacteria that undergo differentiation, in morphogenesis control. This is GTPase Obg from Serratia proteamaculans (strain 568).